Consider the following 399-residue polypeptide: Acetate kinase (399 aa).

Asn7 is a binding site for Mg(2+). Lys14 is an ATP binding site. Arg91 is a binding site for substrate. The active-site Proton donor/acceptor is the Asp148. ATP contacts are provided by residues 208–212 (HLGNG), 283–285 (DFR), and 331–335 (GIGEN). Glu384 contacts Mg(2+).

The protein belongs to the acetokinase family. Homodimer. The cofactor is Mg(2+). It depends on Mn(2+) as a cofactor.

Its subcellular location is the cytoplasm. It carries out the reaction acetate + ATP = acetyl phosphate + ADP. It functions in the pathway metabolic intermediate biosynthesis; acetyl-CoA biosynthesis; acetyl-CoA from acetate: step 1/2. In terms of biological role, catalyzes the formation of acetyl phosphate from acetate and ATP. Can also catalyze the reverse reaction. The polypeptide is Acetate kinase (Acetivibrio thermocellus (strain ATCC 27405 / DSM 1237 / JCM 9322 / NBRC 103400 / NCIMB 10682 / NRRL B-4536 / VPI 7372) (Clostridium thermocellum)).